The following is a 77-amino-acid chain: U8-lycotoxin-Ls1i (77 aa).

An N-terminal signal peptide occupies residues 1 to 20 (MKLIIFTGLVLFAIVSLIEV). The propeptide occupies 21–26 (QADNER).

This sequence belongs to the neurotoxin 19 (CSTX) family. 08 (U8-Lctx) subfamily. Contains 4 disulfide bonds. In terms of tissue distribution, expressed by the venom gland.

The protein localises to the secreted. This is U8-lycotoxin-Ls1i from Lycosa singoriensis (Wolf spider).